The primary structure comprises 284 residues: Bifunctional protein FolD (284 aa).

NADP(+) is bound by residues 165 to 167, Ser190, and Ile231; that span reads GRS.

This sequence belongs to the tetrahydrofolate dehydrogenase/cyclohydrolase family. Homodimer.

The enzyme catalyses (6R)-5,10-methylene-5,6,7,8-tetrahydrofolate + NADP(+) = (6R)-5,10-methenyltetrahydrofolate + NADPH. The catalysed reaction is (6R)-5,10-methenyltetrahydrofolate + H2O = (6R)-10-formyltetrahydrofolate + H(+). Its pathway is one-carbon metabolism; tetrahydrofolate interconversion. In terms of biological role, catalyzes the oxidation of 5,10-methylenetetrahydrofolate to 5,10-methenyltetrahydrofolate and then the hydrolysis of 5,10-methenyltetrahydrofolate to 10-formyltetrahydrofolate. This chain is Bifunctional protein FolD, found in Streptococcus thermophilus (strain ATCC BAA-250 / LMG 18311).